The sequence spans 1536 residues: Alpha-2-macroglobulin (1536 aa).

Positions 1 to 23 (MGMKRLIFLVFLLISFSLFGGYA) are cleaved as a signal peptide. The segment at residues 919–922 (CVEQ) is a cross-link (isoglutamyl cysteine thioester (Cys-Gln)).

This sequence belongs to the protease inhibitor I39 (alpha-2-macroglobulin) family. Bacterial alpha-2-macroglobulin subfamily.

In terms of biological role, protects the bacterial cell from peptidases. The polypeptide is Alpha-2-macroglobulin (Thermotoga maritima (strain ATCC 43589 / DSM 3109 / JCM 10099 / NBRC 100826 / MSB8)).